A 117-amino-acid chain; its full sequence is Large ribosomal subunit protein uL18 (117 aa).

It belongs to the universal ribosomal protein uL18 family. Part of the 50S ribosomal subunit; part of the 5S rRNA/L5/L18/L25 subcomplex. Contacts the 5S and 23S rRNAs.

Its function is as follows. This is one of the proteins that bind and probably mediate the attachment of the 5S RNA into the large ribosomal subunit, where it forms part of the central protuberance. The chain is Large ribosomal subunit protein uL18 from Francisella tularensis subsp. tularensis (strain FSC 198).